Here is a 616-residue protein sequence, read N- to C-terminus: Dihydroxy-acid dehydratase (616 aa).

Aspartate 81 lines the Mg(2+) pocket. Cysteine 122 provides a ligand contact to [2Fe-2S] cluster. Aspartate 123 and lysine 124 together coordinate Mg(2+). At lysine 124 the chain carries N6-carboxylysine. Cysteine 195 contacts [2Fe-2S] cluster. Glutamate 491 provides a ligand contact to Mg(2+). Residue serine 517 is the Proton acceptor of the active site.

It belongs to the IlvD/Edd family. In terms of assembly, homodimer. [2Fe-2S] cluster serves as cofactor. Mg(2+) is required as a cofactor.

The enzyme catalyses (2R)-2,3-dihydroxy-3-methylbutanoate = 3-methyl-2-oxobutanoate + H2O. The catalysed reaction is (2R,3R)-2,3-dihydroxy-3-methylpentanoate = (S)-3-methyl-2-oxopentanoate + H2O. The protein operates within amino-acid biosynthesis; L-isoleucine biosynthesis; L-isoleucine from 2-oxobutanoate: step 3/4. It functions in the pathway amino-acid biosynthesis; L-valine biosynthesis; L-valine from pyruvate: step 3/4. In terms of biological role, functions in the biosynthesis of branched-chain amino acids. Catalyzes the dehydration of (2R,3R)-2,3-dihydroxy-3-methylpentanoate (2,3-dihydroxy-3-methylvalerate) into 2-oxo-3-methylpentanoate (2-oxo-3-methylvalerate) and of (2R)-2,3-dihydroxy-3-methylbutanoate (2,3-dihydroxyisovalerate) into 2-oxo-3-methylbutanoate (2-oxoisovalerate), the penultimate precursor to L-isoleucine and L-valine, respectively. This Escherichia fergusonii (strain ATCC 35469 / DSM 13698 / CCUG 18766 / IAM 14443 / JCM 21226 / LMG 7866 / NBRC 102419 / NCTC 12128 / CDC 0568-73) protein is Dihydroxy-acid dehydratase.